Here is a 391-residue protein sequence, read N- to C-terminus: Elongation factor Tu (391 aa).

Positions 10 to 201 (KPHVNIGTIG…AVDDYIPTPE (192 aa)) constitute a tr-type G domain. Residues 19–26 (GHVDHGKT) form a G1 region. 19 to 26 (GHVDHGKT) contacts GTP. Thr26 contacts Mg(2+). Positions 55-59 (GITIS) are G2. The G3 stretch occupies residues 76 to 79 (DCPG). GTP contacts are provided by residues 76–80 (DCPGH) and 131–134 (NKVD). The tract at residues 131–134 (NKVD) is G4. The tract at residues 169 to 171 (SAL) is G5.

Belongs to the TRAFAC class translation factor GTPase superfamily. Classic translation factor GTPase family. EF-Tu/EF-1A subfamily. As to quaternary structure, monomer.

The protein localises to the cytoplasm. It carries out the reaction GTP + H2O = GDP + phosphate + H(+). Functionally, GTP hydrolase that promotes the GTP-dependent binding of aminoacyl-tRNA to the A-site of ribosomes during protein biosynthesis. The polypeptide is Elongation factor Tu (Paracoccus denitrificans (strain Pd 1222)).